Here is a 311-residue protein sequence, read N- to C-terminus: Pantothenate kinase (311 aa).

93 to 100 is an ATP binding site; that stretch reads GSVAVGKS.

Belongs to the prokaryotic pantothenate kinase family.

It is found in the cytoplasm. It catalyses the reaction (R)-pantothenate + ATP = (R)-4'-phosphopantothenate + ADP + H(+). The protein operates within cofactor biosynthesis; coenzyme A biosynthesis; CoA from (R)-pantothenate: step 1/5. This is Pantothenate kinase (coaA) from Haemophilus influenzae (strain ATCC 51907 / DSM 11121 / KW20 / Rd).